The chain runs to 477 residues: Minor capsid protein (477 aa).

The protein belongs to the closteroviridae minor capsid protein family.

The protein localises to the virion. Minor capsid protein that encapsidates the 5'-terminal portion of the viral genome. This Vitis vinifera (Grape) protein is Minor capsid protein.